The sequence spans 413 residues: Aspartate aminotransferase, cytoplasmic (413 aa).

The L-aspartate site is built by glycine 39 and tryptophan 141. Serine 149 is modified (phosphoserine). Asparagine 195 lines the L-aspartate pocket. Residue lysine 259 is modified to N6-(pyridoxal phosphate)lysine. Arginine 387 is a binding site for L-aspartate.

It belongs to the class-I pyridoxal-phosphate-dependent aminotransferase family. As to quaternary structure, homodimer. It depends on pyridoxal 5'-phosphate as a cofactor.

It is found in the cytoplasm. The enzyme catalyses L-aspartate + 2-oxoglutarate = oxaloacetate + L-glutamate. It carries out the reaction L-cysteine + 2-oxoglutarate = 2-oxo-3-sulfanylpropanoate + L-glutamate. It catalyses the reaction (2S)-2-aminobutanoate + 2-oxoglutarate = 2-oxobutanoate + L-glutamate. The catalysed reaction is 3-sulfino-L-alanine + 2-oxoglutarate = 3-sulfinopyruvate + L-glutamate. Biosynthesis of L-glutamate from L-aspartate or L-cysteine. Important regulator of levels of glutamate, the major excitatory neurotransmitter of the vertebrate central nervous system. Acts as a scavenger of glutamate in brain neuroprotection. The aspartate aminotransferase activity is involved in hepatic glucose synthesis during development and in adipocyte glyceroneogenesis. Using L-cysteine as substrate, regulates levels of mercaptopyruvate, an important source of hydrogen sulfide. Mercaptopyruvate is converted into H(2)S via the action of 3-mercaptopyruvate sulfurtransferase (3MST). Hydrogen sulfide is an important synaptic modulator and neuroprotectant in the brain. The sequence is that of Aspartate aminotransferase, cytoplasmic from Pongo abelii (Sumatran orangutan).